A 160-amino-acid chain; its full sequence is Urease accessory protein UreE (160 aa).

It belongs to the UreE family.

Its subcellular location is the cytoplasm. Involved in urease metallocenter assembly. Binds nickel. Probably functions as a nickel donor during metallocenter assembly. This chain is Urease accessory protein UreE, found in Acinetobacter baumannii (strain ACICU).